A 476-amino-acid chain; its full sequence is Ovarian-specific serine/threonine-protein kinase Lok (476 aa).

Residues 69–129 enclose the FHA domain; sequence FTAGRGEAND…NGTFVNNEKI (61 aa). The region spanning 174 to 441 is the Protein kinase domain; that stretch reads YYVNRKLGSG…IDDVLQSSWL (268 aa). Residues 180–188 and Lys203 contribute to the ATP site; that span reads LGSGAYGLV. Catalysis depends on Asp303, which acts as the Proton acceptor.

The protein belongs to the protein kinase superfamily. CAMK Ser/Thr protein kinase family. CDS1 subfamily. In terms of tissue distribution, in stage 3 embryos, both isoforms are expressed in both somatic and pole cell nuclei. Expression in pole cell nuclei is sustained until stage 9 and weakly expressed after pole cell invagination into the abdominal cavity.

It is found in the nucleus speckle. The catalysed reaction is L-seryl-[protein] + ATP = O-phospho-L-seryl-[protein] + ADP + H(+). The enzyme catalyses L-threonyl-[protein] + ATP = O-phospho-L-threonyl-[protein] + ADP + H(+). May have a role in germline establishment. The polypeptide is Ovarian-specific serine/threonine-protein kinase Lok (lok) (Drosophila melanogaster (Fruit fly)).